The chain runs to 305 residues: MVEENSRVLIVLPYTPPSATLQRIIGQTIPFLRECQSQLDIVIVPEFKTSFQLDSALGKMYSITRDVLLGYGMINSGINIIFNNIHFVESNLQWKVVLLPQESTFETWKLELGQGQYHSIEHYALHDNIMEEIEGPKDANKFHVTALGGTFDHIHDGHKILLSVSTFITSQRLICGITCDELLQNKKYKELIEPYDTRCRHVHQFIKLLKPDLSVELVPLRDVCGPTGKVPEIECLVVSRETVSGAETVNKTRIEKGMSPLAVHVVNVLGGREEDGWSEKLSSTEIRRLLKSSASPTCTPQNPCV.

Belongs to the eukaryotic CoaD family.

The protein localises to the cytoplasm. The protein resides in the nucleus. The enzyme catalyses (R)-4'-phosphopantetheine + ATP + H(+) = 3'-dephospho-CoA + diphosphate. In terms of biological role, reversibly transfers an adenylyl group from ATP to 4'-phosphopantetheine, yielding dephospho-CoA (dPCoA) and pyrophosphate. Plays a role in the physiological regulation of the intracellular CoA concentration. The polypeptide is Phosphopantetheine adenylyltransferase (CAB4) (Saccharomyces cerevisiae (strain ATCC 204508 / S288c) (Baker's yeast)).